The following is a 215-amino-acid chain: Urease accessory protein UreG 2 (215 aa).

Residue 11 to 18 (GPVGSGKT) participates in GTP binding.

It belongs to the SIMIBI class G3E GTPase family. UreG subfamily. As to quaternary structure, homodimer. UreD, UreF and UreG form a complex that acts as a GTP-hydrolysis-dependent molecular chaperone, activating the urease apoprotein by helping to assemble the nickel containing metallocenter of UreC. The UreE protein probably delivers the nickel.

Its subcellular location is the cytoplasm. Its function is as follows. Facilitates the functional incorporation of the urease nickel metallocenter. This process requires GTP hydrolysis, probably effectuated by UreG. The sequence is that of Urease accessory protein UreG 2 from Methylorubrum populi (strain ATCC BAA-705 / NCIMB 13946 / BJ001) (Methylobacterium populi).